A 540-amino-acid chain; its full sequence is MHFSLPTSRIVVVVPAAAICIVCVLIETCTAARSHVYTIPLRKGKETSFAETVGEPVRTNQVNVSVEEQKNNIRGRPGLGYYIEVDIGTPPQKLNVLIDTGSSNFAVAASSHNAISTYYRRNESSTYEDQGTYVKVPYTQGEWSGDLGQDLVQIASLGNQSFQANIAAITESKMFFLNDSRWQGILGLGYAEIARPDSSVEPFFDSLTSQTSIQDIFALQMCGALASTNDTNLGSSADGPVEEVIGSMNIGGLDASLYHGTMQYAPLRDEWFYEVIMTDIRVGNDSLGLDCKEYNFDKTIVDSGTTNLRLPVRVFEAITNAIKAHTTKHMPDVPSEFWTGMNLMCPTDSTSPYEPYHWFPTLTLDLQSTNQGQAFSLVVSPQQYLRRDYDHEDKKNCFKFAIAPSTNHAGAVIGAVIMEGFYVVFDRENKRVGFARSTCPGACEKTGTCVGNSPLITEAFNIDFDASDCGYDRSTSYDPALTITAYVLAAICLVCLIPVIVFALTHQINKRCKGRRGRGVVNHHRLDQEGLAENEPNSDP.

The first 31 residues, 1 to 31 (MHFSLPTSRIVVVVPAAAICIVCVLIETCTA), serve as a signal peptide directing secretion. Positions 81 to 435 (YYIEVDIGTP…DRENKRVGFA (355 aa)) constitute a Peptidase A1 domain. Catalysis depends on residues Asp99 and Asp302. Disulfide bonds link Cys222–Cys439, Cys291–Cys469, and Cys345–Cys397. Residues 483 to 503 (ITAYVLAAICLVCLIPVIVFA) form a helical membrane-spanning segment. Topologically, residues 504–540 (LTHQINKRCKGRRGRGVVNHHRLDQEGLAENEPNSDP) are cytoplasmic.

Belongs to the peptidase A1 family.

It localises to the membrane. In Strongylocentrotus purpuratus (Purple sea urchin), this protein is Beta-secretase.